We begin with the raw amino-acid sequence, 254 residues long: DNA repair protein RecO (254 aa).

Belongs to the RecO family.

In terms of biological role, involved in DNA repair and RecF pathway recombination. The protein is DNA repair protein RecO of Anaeromyxobacter dehalogenans (strain 2CP-C).